Reading from the N-terminus, the 130-residue chain is S-adenosylmethionine decarboxylase proenzyme (130 aa).

Serine 63 functions as the Schiff-base intermediate with substrate; via pyruvic acid in the catalytic mechanism. Serine 63 is subject to Pyruvic acid (Ser); by autocatalysis. Catalysis depends on histidine 68, which acts as the Proton acceptor; for processing activity. Catalysis depends on cysteine 83, which acts as the Proton donor; for catalytic activity.

This sequence belongs to the prokaryotic AdoMetDC family. Type 1 subfamily. As to quaternary structure, heterotetramer of two alpha and two beta chains arranged as a dimer of alpha/beta heterodimers. Pyruvate serves as cofactor. Is synthesized initially as an inactive proenzyme. Formation of the active enzyme involves a self-maturation process in which the active site pyruvoyl group is generated from an internal serine residue via an autocatalytic post-translational modification. Two non-identical subunits are generated from the proenzyme in this reaction, and the pyruvate is formed at the N-terminus of the alpha chain, which is derived from the carboxyl end of the proenzyme. The post-translation cleavage follows an unusual pathway, termed non-hydrolytic serinolysis, in which the side chain hydroxyl group of the serine supplies its oxygen atom to form the C-terminus of the beta chain, while the remainder of the serine residue undergoes an oxidative deamination to produce ammonia and the pyruvoyl group blocking the N-terminus of the alpha chain.

The enzyme catalyses S-adenosyl-L-methionine + H(+) = S-adenosyl 3-(methylsulfanyl)propylamine + CO2. It participates in amine and polyamine biosynthesis; S-adenosylmethioninamine biosynthesis; S-adenosylmethioninamine from S-adenosyl-L-methionine: step 1/1. Catalyzes the decarboxylation of S-adenosylmethionine to S-adenosylmethioninamine (dcAdoMet), the propylamine donor required for the synthesis of the polyamines spermine and spermidine from the diamine putrescine. The chain is S-adenosylmethionine decarboxylase proenzyme (speH) from Thermotoga maritima (strain ATCC 43589 / DSM 3109 / JCM 10099 / NBRC 100826 / MSB8).